The chain runs to 633 residues: DEAD-box ATP-dependent RNA helicase 37 (633 aa).

A disordered region spans residues 1–110 (MSASWADVAD…WNNRSGGWDR (110 aa)). S2 carries the post-translational modification N-acetylserine. Polar residues predominate over residues 11 to 25 (SENTGSGSSNQNSHP). Composition is skewed to gly residues over residues 68–80 (GGSG…GGGY) and 87–101 (PGSG…GGGW). A Q motif motif is present at residues 159–187 (NTFAEIDLGEALNLNIRRCKYVKPTPVQR). The 185-residue stretch at 190 to 374 (IPILLEGRDL…ADFLANYIFL (185 aa)) folds into the Helicase ATP-binding domain. 203–210 (AQTGSGKT) contributes to the ATP binding site. The DEAD box signature appears at 318–321 (DEAD). The 152-residue stretch at 401–552 (HLMDLLHAQR…EVPEWLTRYA (152 aa)) folds into the Helicase C-terminal domain. The tract at residues 555-600 (SSFGGGKNRRSGGRFGGRDFRREGSFGSGRGGYGGGGGGYGGGGGY) is disordered. Positions 580–600 (FGSGRGGYGGGGGGYGGGGGY) are enriched in gly residues.

The protein belongs to the DEAD box helicase family. DDX3/DED1 subfamily.

It carries out the reaction ATP + H2O = ADP + phosphate + H(+). In Arabidopsis thaliana (Mouse-ear cress), this protein is DEAD-box ATP-dependent RNA helicase 37 (RH37).